The sequence spans 205 residues: High frequency lysogenization protein HflD homolog (205 aa).

It belongs to the HflD family.

The protein resides in the cytoplasm. Its subcellular location is the cell inner membrane. This Alkalilimnicola ehrlichii (strain ATCC BAA-1101 / DSM 17681 / MLHE-1) protein is High frequency lysogenization protein HflD homolog.